The chain runs to 431 residues: D-tagatose-1,6-bisphosphate aldolase subunit KbaZ (431 aa).

This sequence belongs to the GatZ/KbaZ family. KbaZ subfamily. Forms a complex with KbaY.

Its pathway is carbohydrate metabolism; D-tagatose 6-phosphate degradation; D-glyceraldehyde 3-phosphate and glycerone phosphate from D-tagatose 6-phosphate: step 2/2. Its function is as follows. Component of the tagatose-1,6-bisphosphate aldolase KbaYZ that is required for full activity and stability of the Y subunit. Could have a chaperone-like function for the proper and stable folding of KbaY. When expressed alone, KbaZ does not show any aldolase activity. The polypeptide is D-tagatose-1,6-bisphosphate aldolase subunit KbaZ (Salmonella arizonae (strain ATCC BAA-731 / CDC346-86 / RSK2980)).